The chain runs to 957 residues: Glycine dehydrogenase (decarboxylating) (957 aa).

Position 702 is an N6-(pyridoxal phosphate)lysine (lysine 702).

It belongs to the GcvP family. As to quaternary structure, the glycine cleavage system is composed of four proteins: P, T, L and H. Pyridoxal 5'-phosphate serves as cofactor.

The enzyme catalyses N(6)-[(R)-lipoyl]-L-lysyl-[glycine-cleavage complex H protein] + glycine + H(+) = N(6)-[(R)-S(8)-aminomethyldihydrolipoyl]-L-lysyl-[glycine-cleavage complex H protein] + CO2. Its function is as follows. The glycine cleavage system catalyzes the degradation of glycine. The P protein binds the alpha-amino group of glycine through its pyridoxal phosphate cofactor; CO(2) is released and the remaining methylamine moiety is then transferred to the lipoamide cofactor of the H protein. In Bradyrhizobium sp. (strain BTAi1 / ATCC BAA-1182), this protein is Glycine dehydrogenase (decarboxylating).